The chain runs to 523 residues: Exodeoxyribonuclease 7 large subunit (523 aa).

A disordered region spans residues 502–523; the sequence is PGASPAARTRAGKAKADQGSLF.

This sequence belongs to the XseA family. Heterooligomer composed of large and small subunits.

Its subcellular location is the cytoplasm. It carries out the reaction Exonucleolytic cleavage in either 5'- to 3'- or 3'- to 5'-direction to yield nucleoside 5'-phosphates.. Functionally, bidirectionally degrades single-stranded DNA into large acid-insoluble oligonucleotides, which are then degraded further into small acid-soluble oligonucleotides. The polypeptide is Exodeoxyribonuclease 7 large subunit (Rhodospirillum centenum (strain ATCC 51521 / SW)).